Consider the following 477-residue polypeptide: Aspartyl/glutamyl-tRNA(Asn/Gln) amidotransferase subunit B (477 aa).

This sequence belongs to the GatB/GatE family. GatB subfamily. In terms of assembly, heterotrimer of A, B and C subunits.

It catalyses the reaction L-glutamyl-tRNA(Gln) + L-glutamine + ATP + H2O = L-glutaminyl-tRNA(Gln) + L-glutamate + ADP + phosphate + H(+). It carries out the reaction L-aspartyl-tRNA(Asn) + L-glutamine + ATP + H2O = L-asparaginyl-tRNA(Asn) + L-glutamate + ADP + phosphate + 2 H(+). Its function is as follows. Allows the formation of correctly charged Asn-tRNA(Asn) or Gln-tRNA(Gln) through the transamidation of misacylated Asp-tRNA(Asn) or Glu-tRNA(Gln) in organisms which lack either or both of asparaginyl-tRNA or glutaminyl-tRNA synthetases. The reaction takes place in the presence of glutamine and ATP through an activated phospho-Asp-tRNA(Asn) or phospho-Glu-tRNA(Gln). The polypeptide is Aspartyl/glutamyl-tRNA(Asn/Gln) amidotransferase subunit B (Streptococcus gordonii (strain Challis / ATCC 35105 / BCRC 15272 / CH1 / DL1 / V288)).